A 242-amino-acid chain; its full sequence is Endothelial protein C receptor (242 aa).

The N-terminal stretch at 1–17 (MLTKFLPLLLLLLPGCA) is a signal peptide. At 18–214 (LCNSDGSQSL…GSQTGRSYTS (197 aa)) the chain is on the extracellular side. 5 N-linked (GlcNAc...) asparagine glycosylation sites follow: asparagine 46, asparagine 63, asparagine 140, asparagine 166, and asparagine 176. 2 disulfides stabilise this stretch: cysteine 119/cysteine 190 and cysteine 223/cysteine 236. The chain crosses the membrane as a helical span at residues 215–235 (LVLGILMGCFIIAGVAVGIFM). Over 236 to 242 (CTSGRRC) the chain is Cytoplasmic.

Expressed in endothelial cells.

The protein localises to the membrane. Its function is as follows. Binds activated protein C. Enhances protein C activation by the thrombin-thrombomodulin complex; plays a role in the protein C pathway controlling blood coagulation. The sequence is that of Endothelial protein C receptor (Procr) from Mus musculus (Mouse).